Reading from the N-terminus, the 90-residue chain is Elongation factor 1-beta (90 aa).

Belongs to the EF-1-beta/EF-1-delta family.

Functionally, promotes the exchange of GDP for GTP in EF-1-alpha/GDP, thus allowing the regeneration of EF-1-alpha/GTP that could then be used to form the ternary complex EF-1-alpha/GTP/AAtRNA. This Aeropyrum pernix (strain ATCC 700893 / DSM 11879 / JCM 9820 / NBRC 100138 / K1) protein is Elongation factor 1-beta (ef1b).